The following is a 107-amino-acid chain: uncharacterized protein (107 aa).

Positions 88-97 are enriched in basic and acidic residues; sequence EEKKEKDKGK. The tract at residues 88-107 is disordered; that stretch reads EEKKEKDKGKKGLLSRLKFW. Positions 98-107 are enriched in basic residues; the sequence is KGLLSRLKFW.

This is an uncharacterized protein from Methanocaldococcus jannaschii (strain ATCC 43067 / DSM 2661 / JAL-1 / JCM 10045 / NBRC 100440) (Methanococcus jannaschii).